We begin with the raw amino-acid sequence, 144 residues long: Large ribosomal subunit protein uL15 (144 aa).

The tract at residues 1–57 (MKLNDLSPAPGSRREKHRPGRGIGSGLGKTGGRGHKGQSSRSGGTIAPGFEGGQQPL) is disordered. The segment covering 21–31 (RGIGSGLGKTG) has biased composition (gly residues).

Belongs to the universal ribosomal protein uL15 family. As to quaternary structure, part of the 50S ribosomal subunit.

Binds to the 23S rRNA. The chain is Large ribosomal subunit protein uL15 from Pseudomonas savastanoi pv. phaseolicola (strain 1448A / Race 6) (Pseudomonas syringae pv. phaseolicola (strain 1448A / Race 6)).